Reading from the N-terminus, the 429-residue chain is Probable M18 family aminopeptidase 2 (429 aa).

Residues His-82, His-156, and His-401 each contribute to the Zn(2+) site.

Belongs to the peptidase M18 family. Requires Zn(2+) as cofactor.

In Pseudomonas savastanoi pv. phaseolicola (strain 1448A / Race 6) (Pseudomonas syringae pv. phaseolicola (strain 1448A / Race 6)), this protein is Probable M18 family aminopeptidase 2.